A 1047-amino-acid chain; its full sequence is MDAEAEDKTLRTRSKGTEVPMDSLIQELSVAYDCSMAKKRTAEDQALGVPVNKRKSLLMKPRHYSPKADCQEDRSDRTEDDGPLETHGHSTAEEIMIKPMDESLLSTAQENSSRKEDRYSCYQELMVKSLMHLGKFEKNVSVQTVSENLNDSGIQSLKAESDEADECFLIHSDDGRDKIDDSQPPFCSSDDNESNSESAENGWDSGSNFSEETKPPRVPKYVLTDHKKDLLEVPEIKTEGDKFIPCENRCDSETERKDPQNALAEPLDGNAQPSFPDVEEEDSESLAVMTEEGSDLEKAKGNLSLLEQAIALQAERGCVFHNTYKELDRFLLEHLAGERRQTKVIDMGGRQIFNNKHSPRPEKRETKCPIPGCDGTGHVTGLYPHHRSLSGCPHKVRVPLEILAMHENVLKCPTPGCTGRGHVNSNRNTHRSLSGCPIAAAEKLAMSQDKNQLDSPQTGQCPDQAHRTSLVKQIEFNFPSQAITSPRATVSKEQEKFGKVPFDYASFDAQVFGKRPLIQTVQGRKTPPFPESKHFPNPVKFPNRLPSAGAHTQSPGRASSYSYGQCSEDTHIAAAAAILNLSTRCREATDILSNKPQSLHAKGAEIEVDENGTLDLSMKKNRILDKSAPLTSSNTSIPTPSSSPFKTSSILVNAAFYQALCDQEGWDTPINYSKTHGKTEEEKEKDPVSSLENLEEKKFPGEASIPSPKPKLHARDLKKELITCPTPGCDGSGHVTGNYASHRSVSGCPLADKTLKSLMAANSQELKCPTPGCDGSGHVTGNYASHRSLSGCPRARKGGVKMTPTKEEKEDPELKCPVIGCDGQGHISGKYTSHRTASGCPLAAKRQKENPLNGASLSWKLNKQELPHCPLPGCNGLGHVNNVFVTHRSLSGCPLNAQVIKKGKVSEELMTIKLKATGGIESDEEIRHLDEEIKELNESNLKIEADMMKLQTQITSMESNLKTIEEENKLIEQNNESLLKELAGLSQALISSLADIQLPQMGPISEQNFEAYVNTLTDMYSNLERDYSPECKALLESIKQAVKGIHV.

Disordered regions lie at residues 41 to 92, 168 to 221, and 251 to 286; these read TAED…HSTA, FLIH…VPKY, and DSET…SESL. A compositionally biased stretch (basic residues) spans 52 to 65; the sequence is NKRKSLLMKPRHYS. The segment covering 171-181 has biased composition (basic and acidic residues); sequence HSDDGRDKIDD. 2 CCHHC-type zinc fingers span residues 359-402 and 403-446; these read PRPE…PLEI and LAMH…KLAM. Zn(2+) is bound by residues Cys368, Cys373, His386, Cys392, Cys412, Cys417, His430, and Cys436. 2 disordered regions span residues 523–563 and 672–710; these read GRKT…SYSY and YSKT…SPKP. A compositionally biased stretch (polar residues) spans 550-563; that stretch reads AHTQSPGRASSYSY. The span at 677 to 687 shows a compositional bias: basic and acidic residues; sequence GKTEEEKEKDP. CCHHC-type zinc fingers lie at residues 715-758, 759-802, 807-850, and 860-903; these read RDLK…LKSL, MAAN…GVKM, EEKE…QKEN, and KLNK…IKKG. Zn(2+) is bound by residues Cys724, Cys729, His742, Cys748, Cys768, Cys773, His786, Cys792, Cys816, Cys821, His834, Cys840, Cys869, Cys874, His887, and Cys893. Positions 920–992 form a coiled coil; the sequence is IESDEEIRHL…AGLSQALISS (73 aa).

This sequence belongs to the MYT1 family. As to expression, detected at low levels in heart, liver, kidney, skeletal muscle, pancreas, testis, ovary and prostate. Detected at even lower levels in mammary epithelial cells and breast cancer cells.

It is found in the nucleus. Functionally, repressor that binds to DNA sequences containing a bipartite element consisting of a direct repeat of the sequence 5'-AAAGTTT-3' separated by 2-9 nucleotides. Represses basal transcription activity from target promoters. Inhibits colony formation in cultured breast cancer cells. This chain is Suppression of tumorigenicity 18 protein (ST18), found in Homo sapiens (Human).